The sequence spans 120 residues: UPF0102 protein COXBURSA331_A1934 (120 aa).

The protein belongs to the UPF0102 family.

This is UPF0102 protein COXBURSA331_A1934 from Coxiella burnetii (strain RSA 331 / Henzerling II).